We begin with the raw amino-acid sequence, 179 residues long: Protein GrpE (179 aa).

Positions 1–20 (MSEETKEEIKNEKVDEEVTE) are disordered.

This sequence belongs to the GrpE family. In terms of assembly, homodimer.

The protein localises to the cytoplasm. Functionally, participates actively in the response to hyperosmotic and heat shock by preventing the aggregation of stress-denatured proteins, in association with DnaK and GrpE. It is the nucleotide exchange factor for DnaK and may function as a thermosensor. Unfolded proteins bind initially to DnaJ; upon interaction with the DnaJ-bound protein, DnaK hydrolyzes its bound ATP, resulting in the formation of a stable complex. GrpE releases ADP from DnaK; ATP binding to DnaK triggers the release of the substrate protein, thus completing the reaction cycle. Several rounds of ATP-dependent interactions between DnaJ, DnaK and GrpE are required for fully efficient folding. In Lactococcus lactis subsp. lactis (strain IL1403) (Streptococcus lactis), this protein is Protein GrpE.